A 286-amino-acid polypeptide reads, in one-letter code: ATP synthase gamma chain (286 aa).

The protein belongs to the ATPase gamma chain family. In terms of assembly, F-type ATPases have 2 components, CF(1) - the catalytic core - and CF(0) - the membrane proton channel. CF(1) has five subunits: alpha(3), beta(3), gamma(1), delta(1), epsilon(1). CF(0) has three main subunits: a, b and c.

It is found in the cell membrane. Produces ATP from ADP in the presence of a proton gradient across the membrane. The gamma chain is believed to be important in regulating ATPase activity and the flow of protons through the CF(0) complex. The chain is ATP synthase gamma chain from Bacillus anthracis (strain A0248).